A 226-amino-acid chain; its full sequence is Exopolysaccharide production protein ExoY (226 aa).

A helical transmembrane segment spans residues 34–54 (VLIAILALIALSPLFLLVMGL).

It belongs to the bacterial sugar transferase family.

The protein localises to the cell membrane. It participates in glycan metabolism; exopolysaccharide biosynthesis. Its function is as follows. Needed for the addition of the first sugar (galactose) to the isoprenoid carrier. May function as a sugar transferase. The sequence is that of Exopolysaccharide production protein ExoY (exoY) from Sinorhizobium fredii (strain NBRC 101917 / NGR234).